Reading from the N-terminus, the 589-residue chain is uncharacterized protein (589 aa).

Disordered stretches follow at residues 328–365, 379–459, 525–555, and 569–589; these read LSSTSDASAAPAGVAGGGKARQMQFSQGGSGQGAEDGP, SLLG…DPSN, RSTSRLDAGEGQGDDDDEEDGQAEKYEGAVK, and VRGTKVVVQPSPPGDDSSRDM. Positions 398-425 are enriched in polar residues; the sequence is VSLSSASTSARPTQRRSSLTPCSQTPQE. Residues 426 to 445 show a composition bias toward basic and acidic residues; sequence THQHAREALTTRMESQREAN. Acidic residues predominate over residues 536-545; that stretch reads QGDDDDEEDG.

This is an uncharacterized protein from Mycosarcoma maydis (Corn smut fungus).